Reading from the N-terminus, the 371-residue chain is MAATEGTVVVKIGTSSLTDMQTGSLRLSVLGPLVEVLTRLRSQGYAVILVSSGAVGIGCARLGLRQRPTAIAEKQAVAAVGQGRLIRLYDDLFSALNQPIAQVLLTRGDFVERSRYVNANRTFTQLLQMGVIPIVNENDTVAVEELKFGDNDSLSALVASMVQAKWLILLTDVDRLYSADPHRDPSAEPIERVWRGMPLQIKAEAHGNSGWGTGGMATKLAAAQIATAAGVTVVITNGKRPDQIPAILAGEPIGTRFEPAPQPVSARKRWIAYGLIPEGSLTLDEGAVRAICEQGRSLLPAGITDVSGDFEAGAAVRLCDPGGREVGRGLVNYSAEELRRIKGKKTAEIPYILGYEGVDTAVHRDNLALLD.

An ATP-binding site is contributed by lysine 11. Substrate-binding residues include serine 52, aspartate 139, and asparagine 151. ATP-binding positions include 171 to 172 (TD) and 213 to 219 (TGGMATK). The PUA domain maps to 278 to 356 (EGSLTLDEGA…AEIPYILGYE (79 aa)).

It belongs to the glutamate 5-kinase family.

The protein resides in the cytoplasm. It carries out the reaction L-glutamate + ATP = L-glutamyl 5-phosphate + ADP. The protein operates within amino-acid biosynthesis; L-proline biosynthesis; L-glutamate 5-semialdehyde from L-glutamate: step 1/2. In terms of biological role, catalyzes the transfer of a phosphate group to glutamate to form L-glutamate 5-phosphate. This chain is Glutamate 5-kinase, found in Synechococcus sp. (strain JA-3-3Ab) (Cyanobacteria bacterium Yellowstone A-Prime).